Consider the following 577-residue polypeptide: Polyadenylate-binding protein, cytoplasmic and nuclear (577 aa).

The segment covering 1–10 has biased composition (basic and acidic residues); it reads MADITDKTAE. Residues 1 to 36 form a disordered region; sequence MADITDKTAEQLENLNIQDDQKQAATGSESQSVENS. Alanine 2 is subject to N-acetylalanine. Residue lysine 7 forms a Glycyl lysine isopeptide (Lys-Gly) (interchain with G-Cter in ubiquitin) linkage. Residues 9-61 are required and sufficient for nuclear export; that stretch reads AEQLENLNIQDDQKQAATGSESQSVENSSASLYVGDLEPSVSEAHLYDIFSPI. Polar residues predominate over residues 11–27; it reads QLENLNIQDDQKQAATG. The Nuclear export signal signature appears at 12 to 17; sequence LENLNI. 4 consecutive RRM domains span residues 38 to 116, 126 to 203, 219 to 296, and 322 to 399; these read ASLY…WSQR, GNIF…PHLS, TNLY…RAQK, and VNLF…IAQR. Arginine 107 bears the Omega-N-methylarginine mark. The residue at position 249 (serine 249) is a Phosphoserine. The required and sufficient for nuclear import stretch occupies residues 281–317; it reads DSELNGEKLYVGRAQKKNERMHVLKKQYEAYRLEKMA. A Phosphoserine modification is found at serine 332. Residue lysine 337 forms a Glycyl lysine isopeptide (Lys-Gly) (interchain with G-Cter in ubiquitin) linkage. Serine 405 bears the Phosphoserine mark. An interaction with SUP35 region spans residues 473 to 577; the sequence is PPQFRNGPVY…KEQEQQTEQA (105 aa). Residues 489–568 enclose the PABC domain; it reads GFPRNANDNN…ASAAYESFKK (80 aa).

The protein belongs to the polyadenylate-binding protein type-1 family. As to quaternary structure, binds to poly(A) mRNA to form a periodic structure with a packing density of one molecule per 25 adenylate residues. Interacts with the nuclear export factor CRM1 and with the importin SXM1. Interacts with RNA15, a component of the cleavage factor IA (CFIA) complex. Interacts with translation initiation factor eIF4G (TIF4631 or TIF4632) and release factor eRF3 (SUP35). Interacts with the PAB-dependent poly(A)-nuclease (PAN) complex regulatory subunit PAN3. Interacts with ARF1, DCP1, PBP1, the Hsp70 chaperone SSA1, and TPA1. Interacts with PAT1 in an RNA-dependent manner.

It localises to the cytoplasm. Its subcellular location is the nucleus. Its function is as follows. Binds the poly(A) tail of mRNA. Appears to be an important mediator of the multiple roles of the poly(A) tail in mRNA biogenesis, stability and translation. In the nucleus, interacts with the nuclear cleavage factor IA (CFIA), which is required for both mRNA cleavage and polyadenylation. Is also required for efficient mRNA export to the cytoplasm. Acts in concert with a poly(A)-specific nuclease (PAN) to affect poly(A) tail shortening, which may occur concomitantly with either nucleocytoplasmic mRNA transport or translational initiation. Regulates PAN activity via interaction with the stimulator PAN3 or the inhibitor PBP1. In the cytoplasm, affects both translation and mRNA decay. Stimulates translation by interaction with translation initiation factor eIF4G, a subunit of the cap-binding complex eIF4F, bringing the 5'- and 3'-ends of the mRNA in proximity. The formation of this circular mRNP structure appears to be critical for the synergistic effects of the cap and the poly(A) tail in facilitating translation initiation, recycling of ribosomes, and mRNA stability. Also regulates translation termination by recruiting eukaryotic release factor 3 (eRF3). Interaction with eRF3 is also required for regulation of normal mRNA decay through translation termination-coupled poly(A) shortening, probably mediated by PAN. Loss of PAB1 from the mRNP after deadenylation triggers mRNA degradation. Inhibits the major cytoplasmic mRNA deadenylase CCR4-NOT complex. Is also associated peripherally with COPI vesicles through its interaction with ARF1, and this is required for correct localization of the asymmetrically distributed ASH1 mRNA. The sequence is that of Polyadenylate-binding protein, cytoplasmic and nuclear (PAB1) from Saccharomyces cerevisiae (strain ATCC 204508 / S288c) (Baker's yeast).